The sequence spans 81 residues: UPF0434 protein msl4429 (81 aa).

This sequence belongs to the UPF0434 family.

The sequence is that of UPF0434 protein msl4429 from Mesorhizobium japonicum (strain LMG 29417 / CECT 9101 / MAFF 303099) (Mesorhizobium loti (strain MAFF 303099)).